A 432-amino-acid chain; its full sequence is Glutamyl-tRNA reductase (432 aa).

Substrate is bound by residues 49–52 (TCNR), Ser107, 112–114 (ETQ), and Gln118. The active-site Nucleophile is Cys50. 186 to 191 (GAGEMG) is an NADP(+) binding site.

It belongs to the glutamyl-tRNA reductase family. As to quaternary structure, homodimer.

The enzyme catalyses (S)-4-amino-5-oxopentanoate + tRNA(Glu) + NADP(+) = L-glutamyl-tRNA(Glu) + NADPH + H(+). The protein operates within porphyrin-containing compound metabolism; protoporphyrin-IX biosynthesis; 5-aminolevulinate from L-glutamyl-tRNA(Glu): step 1/2. Functionally, catalyzes the NADPH-dependent reduction of glutamyl-tRNA(Glu) to glutamate 1-semialdehyde (GSA). The chain is Glutamyl-tRNA reductase from Campylobacter jejuni (strain RM1221).